Here is a 658-residue protein sequence, read N- to C-terminus: MDQITITFPDGKTREYPRGTTGLDIAKGISPSLAKRTVVMALNGTLTDLADPIDDNASIDFVARDDARALELIRHDCAHVLAEAVQSLWPGTQVTIGPTIENGFYYDFFRNEPFTPEDFAAIEKKMREIIARDKPFTKEVWTRDEAKKVFADNGEAFKVELVDAIPEDQTIKIYKQGEWFDLCRGPHMTSTGKIGTAFKLMKVAGAYWRGDSNNPMLTRIYGTAFAKQDDLDAYLHQIEEAEKRDHRKLGRELDLFHFQEEGPGVVFWHAKGWSLFQSLVGYMRRRLAGDYDEVNAPQILDKVLWETSGHWEWYRENMFAAQSAGDDAEDKRWFALKPMNCPGHVQIFKHGLKSYRDLPLRLAEFGVVHRYEPSGAMHGLMRVRGFTQDDAHVFCTEAQLAEECIKINDLILSTYSDFGFEGELTVKLSTRPEKRVGTDEMWDHAERVMATVLSEIKAKGGNRIKTEINPGEGAFYGPKFEYVLRDAIGRDWQCGTTQVDFNLPERFGAFYIDADGAKKAPVMVHRAICGSMERFTGILIEHYAGNFPLWLAPVQVVVTTITSEGDDYAKKVLAALRKAGLRADIDLRNEKINFKVREHSLAKVPALLVVGKKEAESHSVSVRRLGSDGQKVMPTDEAIAALVDEATPPDVKRMRGAA.

A TGS domain is found at 1 to 63; sequence MDQITITFPD…DDNASIDFVA (63 aa). The catalytic stretch occupies residues 245-548; the sequence is DHRKLGRELD…LIEHYAGNFP (304 aa). Zn(2+)-binding residues include Cys-341, His-392, and His-525.

It belongs to the class-II aminoacyl-tRNA synthetase family. As to quaternary structure, homodimer. Requires Zn(2+) as cofactor.

It is found in the cytoplasm. It catalyses the reaction tRNA(Thr) + L-threonine + ATP = L-threonyl-tRNA(Thr) + AMP + diphosphate + H(+). Functionally, catalyzes the attachment of threonine to tRNA(Thr) in a two-step reaction: L-threonine is first activated by ATP to form Thr-AMP and then transferred to the acceptor end of tRNA(Thr). Also edits incorrectly charged L-seryl-tRNA(Thr). The sequence is that of Threonine--tRNA ligase from Rhodopseudomonas palustris (strain ATCC BAA-98 / CGA009).